The following is a 220-amino-acid chain: Pyridoxine/pyridoxamine 5'-phosphate oxidase (220 aa).

Substrate contacts are provided by residues 8-11 (RKSY) and lysine 66. FMN contacts are provided by residues 61–66 (RVVLIK), 76–77 (FT), arginine 82, and lysine 83. Substrate-binding residues include tyrosine 123, arginine 127, and serine 131. Residues 140–141 (QS) and tryptophan 184 each bind FMN. A substrate-binding site is contributed by 190 to 192 (RLH). Residue arginine 194 coordinates FMN.

Belongs to the pyridoxamine 5'-phosphate oxidase family. As to quaternary structure, homodimer. The cofactor is FMN.

The enzyme catalyses pyridoxamine 5'-phosphate + O2 + H2O = pyridoxal 5'-phosphate + H2O2 + NH4(+). It carries out the reaction pyridoxine 5'-phosphate + O2 = pyridoxal 5'-phosphate + H2O2. It participates in cofactor metabolism; pyridoxal 5'-phosphate salvage; pyridoxal 5'-phosphate from pyridoxamine 5'-phosphate: step 1/1. The protein operates within cofactor metabolism; pyridoxal 5'-phosphate salvage; pyridoxal 5'-phosphate from pyridoxine 5'-phosphate: step 1/1. Functionally, catalyzes the oxidation of either pyridoxine 5'-phosphate (PNP) or pyridoxamine 5'-phosphate (PMP) into pyridoxal 5'-phosphate (PLP). This is Pyridoxine/pyridoxamine 5'-phosphate oxidase from Albidiferax ferrireducens (strain ATCC BAA-621 / DSM 15236 / T118) (Rhodoferax ferrireducens).